We begin with the raw amino-acid sequence, 116 residues long: Ig heavy chain V region 3-6 (116 aa).

The signal sequence occupies residues 1–18 (MKVLSLLYLLTAIPGILS). Positions 19-48 (DVQLQESGPGLVKPSQSLSLTCSVTGYSIT) are framework-1. Cys-40 and Cys-114 form a disulfide bridge. The interval 49 to 53 (SGYYW) is complementarity-determining-1. The framework-2 stretch occupies residues 54 to 67 (NWIRQFPGNKLEWM). Positions 68-84 (GYISYDGSNNYNPSLKN) are complementarity-determining-2. Residues 85 to 116 (RISITRDTSKNQFFLKLNSVTTEDTATYYCAR) are framework-3.

The polypeptide is Ig heavy chain V region 3-6 (Ighv3-6) (Mus musculus (Mouse)).